A 146-amino-acid polypeptide reads, in one-letter code: Snaclec stejaggregin-B subunit beta-1 (146 aa).

The signal sequence occupies residues 1 to 23 (MGRFIFVSFGLLVVFLSLSGTGA). Disulfide bonds link cysteine 25/cysteine 36, cysteine 53/cysteine 142, and cysteine 119/cysteine 134. The C-type lectin domain maps to 32–143 (YDLYCYRVFQ…CSQTYPFVCK (112 aa)).

This sequence belongs to the snaclec family. As to quaternary structure, heteromultimer; disulfide-linked. Expressed by the venom gland.

The protein localises to the secreted. Interferes with one step of hemostasis (modulation of platelet aggregation, or coagulation cascade, for example). This Trimeresurus stejnegeri (Chinese green tree viper) protein is Snaclec stejaggregin-B subunit beta-1.